A 101-amino-acid chain; its full sequence is Small ribosomal subunit protein uS14 (101 aa).

Positions 1-10 (MAKKSSIEKN) are enriched in basic and acidic residues. The disordered stretch occupies residues 1–25 (MAKKSSIEKNNRRKKMAKNAAPKRE).

The protein belongs to the universal ribosomal protein uS14 family. As to quaternary structure, part of the 30S ribosomal subunit. Contacts proteins S3 and S10.

Functionally, binds 16S rRNA, required for the assembly of 30S particles and may also be responsible for determining the conformation of the 16S rRNA at the A site. This is Small ribosomal subunit protein uS14 from Rhodopseudomonas palustris (strain BisA53).